The primary structure comprises 367 residues: C-X-C chemokine receptor type 3 (367 aa).

Over 1–56 (MYLEVSERQVLDASDIAFLLENSTSPYDYGENESDFSDSPPCPQDFSLNFDRTFLP) the chain is Extracellular. The N-linked (GlcNAc...) asparagine glycan is linked to Asn22. Sulfotyrosine is present on residues Tyr27 and Tyr29. An N-linked (GlcNAc...) asparagine glycan is attached at Asn32. The helical transmembrane segment at 57 to 77 (VLYSLLFLLGLLGNGAVAAVL) threads the bilayer. Over 78–89 (LSQRTALSSTDT) the chain is Cytoplasmic. The helical transmembrane segment at 90 to 110 (FLLHLAVADVLLVLTLPLWAV) threads the bilayer. Topologically, residues 111–125 (DAAAQWVFGSGLCKV) are extracellular. A disulfide bridge connects residues Cys123 and Cys202. A helical membrane pass occupies residues 126–146 (AGALFNINFYAGAFLLACISF). Over 147–168 (DRYLSIVHATQIYRRDPWVRVA) the chain is Cytoplasmic. A helical membrane pass occupies residues 169 to 189 (LTCIVVWGLCVLFALPDFIFL). Topologically, residues 190–222 (SASHDQRLNATHCQYNFPQVGRTALRVLQLVAG) are extracellular. Asn198 carries an N-linked (GlcNAc...) asparagine glycan. A helical membrane pass occupies residues 223-243 (FLMPLLVMAYCYAHILAVLLV). Topologically, residues 244–255 (SRGQRRFRAMRL) are cytoplasmic. Residues 256 to 276 (VVVVVVAFAVCWTPYHLVVLV) form a helical membrane-spanning segment. At 277–300 (DILMDVGVLARNCGRESHVDVAKS) the chain is on the extracellular side. The helical transmembrane segment at 301-321 (VTSGMGYMHCCLNPLLYAFVG) threads the bilayer. Over 322–367 (VKFKEQMWMLLMRLGRSDQRGPQRQPSSSRRESSWSETTEASYLGL) the chain is Cytoplasmic. The disordered stretch occupies residues 339–367 (DQRGPQRQPSSSRRESSWSETTEASYLGL).

The protein belongs to the G-protein coupled receptor 1 family. In terms of assembly, homomer. Forms heteromers with ACKR4. Interacts with PF4/CXCL4. In terms of processing, sulfation on Tyr-27 and Tyr-29 is essential for CXCL10 binding. Post-translationally, N-glycosylated.

The protein localises to the cell membrane. Its function is as follows. Receptor for the C-X-C chemokine CXCL9, CXCL10 and CXCL11 and mediates the proliferation, survival and angiogenic activity of mesangial cells through a heterotrimeric G-protein signaling pathway. Probably promotes cell chemotaxis response. Binds to CCL21. Upon activation by PF4, induces activated T-lymphocytes migration mediated via downstream Ras/extracellular signal-regulated kinase (ERK) signaling. The chain is C-X-C chemokine receptor type 3 (Cxcr3) from Rattus norvegicus (Rat).